Consider the following 160-residue polypeptide: Cytochrome b6-f complex subunit 4 (160 aa).

3 helical membrane-spanning segments follow: residues Leu-36–Val-56, Leu-95–Glu-115, and Ala-131–Ile-151.

It belongs to the cytochrome b family. PetD subfamily. In terms of assembly, the 4 large subunits of the cytochrome b6-f complex are cytochrome b6, subunit IV (17 kDa polypeptide, PetD), cytochrome f and the Rieske protein, while the 4 small subunits are PetG, PetL, PetM and PetN. The complex functions as a dimer.

It is found in the cellular thylakoid membrane. In terms of biological role, component of the cytochrome b6-f complex, which mediates electron transfer between photosystem II (PSII) and photosystem I (PSI), cyclic electron flow around PSI, and state transitions. The sequence is that of Cytochrome b6-f complex subunit 4 from Crocosphaera subtropica (strain ATCC 51142 / BH68) (Cyanothece sp. (strain ATCC 51142)).